Here is a 415-residue protein sequence, read N- to C-terminus: Gamma-glutamyl phosphate reductase (415 aa).

The protein belongs to the gamma-glutamyl phosphate reductase family.

The protein localises to the cytoplasm. It carries out the reaction L-glutamate 5-semialdehyde + phosphate + NADP(+) = L-glutamyl 5-phosphate + NADPH + H(+). It functions in the pathway amino-acid biosynthesis; L-proline biosynthesis; L-glutamate 5-semialdehyde from L-glutamate: step 2/2. Its function is as follows. Catalyzes the NADPH-dependent reduction of L-glutamate 5-phosphate into L-glutamate 5-semialdehyde and phosphate. The product spontaneously undergoes cyclization to form 1-pyrroline-5-carboxylate. This is Gamma-glutamyl phosphate reductase from Desulforamulus reducens (strain ATCC BAA-1160 / DSM 100696 / MI-1) (Desulfotomaculum reducens).